The chain runs to 255 residues: Taurine import ATP-binding protein TauB (255 aa).

The 228-residue stretch at 2–229 folds into the ABC transporter domain; it reads LQISHLYADY…RFVAGESSRS (228 aa). 34-41 contributes to the ATP binding site; the sequence is GPSGCGKT.

The protein belongs to the ABC transporter superfamily. Taurine importer (TC 3.A.1.17.1) family. In terms of assembly, the complex is composed of two ATP-binding proteins (TauB), two transmembrane proteins (TauC) and a solute-binding protein (TauA).

The protein localises to the cell inner membrane. The catalysed reaction is taurine(out) + ATP + H2O = taurine(in) + ADP + phosphate + H(+). Part of the ABC transporter complex TauABC involved in taurine import. Responsible for energy coupling to the transport system. This Shigella flexneri serotype 5b (strain 8401) protein is Taurine import ATP-binding protein TauB.